We begin with the raw amino-acid sequence, 218 residues long: ATP-dependent Clp protease proteolytic subunit 2 (218 aa).

Belongs to the peptidase S14 family. Fourteen ClpP subunits assemble into 2 heptameric rings which stack back to back to give a disk-like structure with a central cavity, resembling the structure of eukaryotic proteasomes.

Its subcellular location is the cytoplasm. The catalysed reaction is Hydrolysis of proteins to small peptides in the presence of ATP and magnesium. alpha-casein is the usual test substrate. In the absence of ATP, only oligopeptides shorter than five residues are hydrolyzed (such as succinyl-Leu-Tyr-|-NHMec, and Leu-Tyr-Leu-|-Tyr-Trp, in which cleavage of the -Tyr-|-Leu- and -Tyr-|-Trp bonds also occurs).. Its function is as follows. Cleaves peptides in various proteins in a process that requires ATP hydrolysis. Has a chymotrypsin-like activity. Plays a major role in the degradation of misfolded proteins. The polypeptide is ATP-dependent Clp protease proteolytic subunit 2 (Gloeobacter violaceus (strain ATCC 29082 / PCC 7421)).